The chain runs to 383 residues: Acetylornithine deacetylase (383 aa).

H80 lines the Zn(2+) pocket. D82 is an active-site residue. Residue D112 coordinates Zn(2+). E144 is a catalytic residue. Zn(2+)-binding residues include E145, E169, and H355.

Belongs to the peptidase M20A family. ArgE subfamily. In terms of assembly, homodimer. Zn(2+) serves as cofactor. It depends on Co(2+) as a cofactor. Glutathione is required as a cofactor.

It is found in the cytoplasm. It catalyses the reaction N(2)-acetyl-L-ornithine + H2O = L-ornithine + acetate. It functions in the pathway amino-acid biosynthesis; L-arginine biosynthesis; L-ornithine from N(2)-acetyl-L-ornithine (linear): step 1/1. In terms of biological role, catalyzes the hydrolysis of the amide bond of N(2)-acetylated L-amino acids. Cleaves the acetyl group from N-acetyl-L-ornithine to form L-ornithine, an intermediate in L-arginine biosynthesis pathway, and a branchpoint in the synthesis of polyamines. The polypeptide is Acetylornithine deacetylase (Salmonella agona (strain SL483)).